Reading from the N-terminus, the 77-residue chain is U8-lycotoxin-Ls1t (77 aa).

The signal sequence occupies residues 1–20 (MKLIIFTGLVPFAIVSLIEA). The propeptide occupies 21 to 26 (QAENEK).

The protein belongs to the neurotoxin 19 (CSTX) family. 08 (U8-Lctx) subfamily. Contains 4 disulfide bonds. In terms of tissue distribution, expressed by the venom gland.

It is found in the secreted. This chain is U8-lycotoxin-Ls1t, found in Lycosa singoriensis (Wolf spider).